The chain runs to 284 residues: Protein G1-like9 (284 aa).

Positions M1–E69 are disordered. Low complexity-rich tracts occupy residues A13–S32 and Q40–A63. The ALOG domain occupies R67–R194. A Nuclear localization signal motif is present at residues K192–R196. Positions V209–S284 are disordered. The span at T246–S284 shows a compositional bias: low complexity.

Belongs to the plant homeotic and developmental regulators ALOG protein family.

The protein localises to the nucleus. Probable transcription regulator that acts as a developmental regulator by promoting cell growth in response to light. This is Protein G1-like9 from Oryza sativa subsp. indica (Rice).